The primary structure comprises 75 residues: UPF0352 protein VV1166 (75 aa).

The protein belongs to the UPF0352 family.

The sequence is that of UPF0352 protein VV1166 from Vibrio vulnificus (strain YJ016).